The chain runs to 225 residues: Cytochrome c oxidase subunit 2 (225 aa).

Residues 1-26 (MMTWSQMSFSDMNSPIMEQMVFFHDH) are Mitochondrial intermembrane-facing. The chain crosses the membrane as a helical span at residues 27–48 (SMMIILMITILTIYMITNIMMN). At 49 to 62 (NLLSRSMMEGQEIE) the chain is on the mitochondrial matrix side. Residues 63-82 (IIWTIIPAITLIFIAIPSLH) traverse the membrane as a helical segment. Topologically, residues 83 to 225 (LLYLTDETFN…KNFINFINSS (143 aa)) are mitochondrial intermembrane. Residues H160, C195, E197, C199, H203, and M206 each contribute to the Cu cation site. E197 serves as a coordination point for Mg(2+).

Belongs to the cytochrome c oxidase subunit 2 family. In terms of assembly, component of the cytochrome c oxidase (complex IV, CIV), a multisubunit enzyme composed of a catalytic core of 3 subunits and several supernumerary subunits. The complex exists as a monomer or a dimer and forms supercomplexes (SCs) in the inner mitochondrial membrane with ubiquinol-cytochrome c oxidoreductase (cytochrome b-c1 complex, complex III, CIII). Cu cation serves as cofactor.

It localises to the mitochondrion inner membrane. It carries out the reaction 4 Fe(II)-[cytochrome c] + O2 + 8 H(+)(in) = 4 Fe(III)-[cytochrome c] + 2 H2O + 4 H(+)(out). Functionally, component of the cytochrome c oxidase, the last enzyme in the mitochondrial electron transport chain which drives oxidative phosphorylation. The respiratory chain contains 3 multisubunit complexes succinate dehydrogenase (complex II, CII), ubiquinol-cytochrome c oxidoreductase (cytochrome b-c1 complex, complex III, CIII) and cytochrome c oxidase (complex IV, CIV), that cooperate to transfer electrons derived from NADH and succinate to molecular oxygen, creating an electrochemical gradient over the inner membrane that drives transmembrane transport and the ATP synthase. Cytochrome c oxidase is the component of the respiratory chain that catalyzes the reduction of oxygen to water. Electrons originating from reduced cytochrome c in the intermembrane space (IMS) are transferred via the dinuclear copper A center (CU(A)) of subunit 2 and heme A of subunit 1 to the active site in subunit 1, a binuclear center (BNC) formed by heme A3 and copper B (CU(B)). The BNC reduces molecular oxygen to 2 water molecules using 4 electrons from cytochrome c in the IMS and 4 protons from the mitochondrial matrix. The protein is Cytochrome c oxidase subunit 2 (COII) of Rhipicephalus sanguineus (Brown dog tick).